The chain runs to 528 residues: Phosphoenolpyruvate carboxykinase (ATP) (528 aa).

Arg56, Tyr192, and Lys198 together coordinate substrate. ATP is bound by residues Lys198, His217, and Gly233–Thr241. Residues Lys198 and His217 each contribute to the Mn(2+) site. Position 254 (Asp254) interacts with Mn(2+). The ATP site is built by Glu282, Arg319, and Thr444. Arg319 serves as a coordination point for substrate.

This sequence belongs to the phosphoenolpyruvate carboxykinase (ATP) family. The cofactor is Mn(2+).

It localises to the cytoplasm. The enzyme catalyses oxaloacetate + ATP = phosphoenolpyruvate + ADP + CO2. Its pathway is carbohydrate biosynthesis; gluconeogenesis. Involved in the gluconeogenesis. Catalyzes the conversion of oxaloacetate (OAA) to phosphoenolpyruvate (PEP) through direct phosphoryl transfer between the nucleoside triphosphate and OAA. The chain is Phosphoenolpyruvate carboxykinase (ATP) from Bacillus cereus (strain 03BB102).